Here is a 750-residue protein sequence, read N- to C-terminus: Photosystem I P700 chlorophyll a apoprotein A1 (750 aa).

A run of 8 helical transmembrane segments spans residues 70 to 93 (VFSA…FHGA), 156 to 179 (LYCT…FHYH), 195 to 219 (LNHH…HVSL), 291 to 309 (IAHH…GHMY), 346 to 369 (WHAQ…HHMY), 385 to 411 (LSLF…IFMV), 433 to 455 (AIIS…LYIH), and 531 to 549 (FLVH…LILL). The [4Fe-4S] cluster site is built by C573 and C582. Helical transmembrane passes span 589 to 610 (HVFL…HFSW) and 664 to 686 (LSAY…MFLF). H675 contributes to the chlorophyll a' binding site. Chlorophyll a contacts are provided by M683 and Y691. Phylloquinone is bound at residue W692. Residues 724-744 (AVGVTHYLLGGIATTWAFFLA) traverse the membrane as a helical segment.

This sequence belongs to the PsaA/PsaB family. The PsaA/B heterodimer binds the P700 chlorophyll special pair and subsequent electron acceptors. PSI consists of a core antenna complex that captures photons, and an electron transfer chain that converts photonic excitation into a charge separation. The eukaryotic PSI reaction center is composed of at least 11 subunits. P700 is a chlorophyll a/chlorophyll a' dimer, A0 is one or more chlorophyll a, A1 is one or both phylloquinones and FX is a shared 4Fe-4S iron-sulfur center. serves as cofactor.

It localises to the plastid. The protein localises to the chloroplast thylakoid membrane. It catalyses the reaction reduced [plastocyanin] + hnu + oxidized [2Fe-2S]-[ferredoxin] = oxidized [plastocyanin] + reduced [2Fe-2S]-[ferredoxin]. PsaA and PsaB bind P700, the primary electron donor of photosystem I (PSI), as well as the electron acceptors A0, A1 and FX. PSI is a plastocyanin-ferredoxin oxidoreductase, converting photonic excitation into a charge separation, which transfers an electron from the donor P700 chlorophyll pair to the spectroscopically characterized acceptors A0, A1, FX, FA and FB in turn. Oxidized P700 is reduced on the lumenal side of the thylakoid membrane by plastocyanin. In Amborella trichopoda, this protein is Photosystem I P700 chlorophyll a apoprotein A1.